The following is a 650-amino-acid chain: Aminopeptidase B (650 aa).

Serine 7 bears the Phosphoserine mark. 298 to 302 (GGMEN) lines the substrate pocket. Histidine 325 lines the Zn(2+) pocket. The active-site Proton acceptor is glutamate 326. The Zn(2+) site is built by histidine 329 and glutamate 348. An N6-acetyllysine modification is found at lysine 446.

It belongs to the peptidase M1 family. Monomer. Requires Zn(2+) as cofactor. Widely expressed.

Its subcellular location is the secreted. It catalyses the reaction Release of N-terminal Arg and Lys from oligopeptides when P1' is not Pro. Also acts on arylamides of Arg and Lys.. Functionally, exopeptidase which selectively removes arginine and/or lysine residues from the N-terminus of several peptide substrates including Arg(0)-Leu-enkephalin, Arg(0)-Met-enkephalin and Arg(-1)-Lys(0)-somatostatin-14. Can hydrolyze leukotriene A4 (LTA-4) into leukotriene B4 (LTB-4). This chain is Aminopeptidase B (Rnpep), found in Rattus norvegicus (Rat).